Here is a 374-residue protein sequence, read N- to C-terminus: uncharacterized protein (374 aa).

Belongs to the mimivirus L41 family.

This is an uncharacterized protein from Acanthamoeba polyphaga (Amoeba).